A 278-amino-acid chain; its full sequence is Large ribosomal subunit protein uL2 (278 aa).

Disordered stretches follow at residues 1 to 58 and 210 to 278; these read MGIR…GGGH and GRMR…GKKR. Positions 23–33 are enriched in basic and acidic residues; it reads EVTRSEPEKSL. The segment covering 40 to 49 has biased composition (low complexity); sequence SGGRNSTGRI. Composition is skewed to basic residues over residues 210 to 220 and 269 to 278; these read GRMRWKGKRPS and VRRRRTGKKR.

Belongs to the universal ribosomal protein uL2 family. As to quaternary structure, part of the 50S ribosomal subunit. Forms a bridge to the 30S subunit in the 70S ribosome.

One of the primary rRNA binding proteins. Required for association of the 30S and 50S subunits to form the 70S ribosome, for tRNA binding and peptide bond formation. It has been suggested to have peptidyltransferase activity; this is somewhat controversial. Makes several contacts with the 16S rRNA in the 70S ribosome. In Beutenbergia cavernae (strain ATCC BAA-8 / DSM 12333 / CCUG 43141 / JCM 11478 / NBRC 16432 / NCIMB 13614 / HKI 0122), this protein is Large ribosomal subunit protein uL2.